The following is a 140-amino-acid chain: Ribosome maturation factor RimP (140 aa).

The protein belongs to the RimP family.

The protein resides in the cytoplasm. In terms of biological role, required for maturation of 30S ribosomal subunits. This Campylobacter jejuni subsp. jejuni serotype O:2 (strain ATCC 700819 / NCTC 11168) protein is Ribosome maturation factor RimP.